Here is a 427-residue protein sequence, read N- to C-terminus: Inward rectifier potassium channel 2 (427 aa).

At 1-81 (MGSVRTNRYS…IFTTCVDIRW (81 aa)) the chain is on the cytoplasmic side. Residues 82-106 (RWMLVIFCLTFILSWLFFGCVFWLI) form a helical membrane-spanning segment. At 107 to 128 (ALLHGDLENQENNKPCVSQVSS) the chain is on the extracellular side. The segment at residues 129–140 (FTAAFLFSIETQ) is an intramembrane region (helical; Pore-forming). The pore-forming intramembrane region spans 141–147 (TTIGYGF). Residues 142-147 (TIGYGF) carry the Selectivity filter motif. Topologically, residues 148–156 (RCVTDECPI) are extracellular. A helical membrane pass occupies residues 157–178 (AVFMVVFQSIVGCIIDAFIIGA). Residues 179 to 427 (VMAKMAKPKK…PRPLRRESEI (249 aa)) are Cytoplasmic-facing. Residues 181 to 208 (AKMAKPKKRNETLVFSHNAVVAMRDGKL) form a polyphosphoinositide (PIP2)-binding region. The interval 386–427 (EEDEIDTGVPESTSTDTHPDMDHHNQAGVPLEPRPLRRESEI) is disordered. Positions 425–427 (SEI) match the PDZ-binding motif.

The protein belongs to the inward rectifier-type potassium channel (TC 1.A.2.1) family. KCNJ2 subfamily. In terms of assembly, homotetramer. Homomultimeric and heteromultimeric association with KCNJ4/Kir2.3, resulting in an enhanced G-protein-induced current. Associates, via its PDZ-recognition domain, with a complex containing LIN7A, LIN7B, LIN7C, DLG1, CASK and APBA1. Found in the apical basilar papilla of the inner ear, brain, muscle, cerebellum, heart and liver.

The protein resides in the cell membrane. The protein localises to the sarcolemma. It localises to the T-tubule. The enzyme catalyses K(+)(in) = K(+)(out). With respect to regulation, activated by phosphatidylinositol 4,5 biphosphate (PtdIns(4,5)P2). In terms of biological role, inward rectifier potassium channels are characterized by a greater tendency to allow potassium to flow into the cell rather than out of it. Their voltage dependence is regulated by the concentration of extracellular potassium; as external potassium is raised, the voltage range of the channel opening shifts to more positive voltages. The inward rectification is mainly due to the blockage of outward current by internal magnesium. Can be blocked by external barium. Probably participates in establishing action potential waveform and excitability of neuronal and muscle tissues. This chain is Inward rectifier potassium channel 2 (KCNJ2), found in Gallus gallus (Chicken).